A 150-amino-acid polypeptide reads, in one-letter code: MKPKNWLILKRKVRFGDCDSAGVIHFHNLLRWAHESWEESIDIYGIPHQDIFPDSNSHKNQIICPIVNCEANFLSPIKIGDLLSIKIFPKKINNHLFQVNTFFLKDEINVAEGKIIHCSLDVDSKLKVKLPDQLERWIEASNINTNLKEC.

The active site involves Asp19.

The protein belongs to the 4-hydroxybenzoyl-CoA thioesterase family. DHNA-CoA hydrolase subfamily.

It catalyses the reaction 1,4-dihydroxy-2-naphthoyl-CoA + H2O = 1,4-dihydroxy-2-naphthoate + CoA + H(+). It functions in the pathway cofactor biosynthesis; phylloquinone biosynthesis. The protein operates within quinol/quinone metabolism; 1,4-dihydroxy-2-naphthoate biosynthesis; 1,4-dihydroxy-2-naphthoate from chorismate: step 7/7. Its function is as follows. Catalyzes the hydrolysis of 1,4-dihydroxy-2-naphthoyl-CoA (DHNA-CoA) to 1,4-dihydroxy-2-naphthoate (DHNA), a reaction involved in phylloquinone (vitamin K1) biosynthesis. This Prochlorococcus marinus subsp. pastoris (strain CCMP1986 / NIES-2087 / MED4) protein is 1,4-dihydroxy-2-naphthoyl-CoA hydrolase.